The following is a 228-amino-acid chain: UPF0173 metal-dependent hydrolase lin1612 (228 aa).

The protein belongs to the UPF0173 family.

In Listeria innocua serovar 6a (strain ATCC BAA-680 / CLIP 11262), this protein is UPF0173 metal-dependent hydrolase lin1612.